The chain runs to 261 residues: MQFAVIGHPIAHSLSPMLHETWLKAAGLFGCYTTLDVEGDGLEAFVQKVRKRQFDGINVTIPHKSAIIPFLDRLEPAAARAGAVNTVYWDGEELVGANTDGTGFARALATWTNAKNSLVIGAGGAARGIIPMLPGHVTVMNRTNQTAEQVAAEFGQSAVPWSRTLDLTPYDVIINTTSVGMAPAIDQTPIELTATTALICDIIYRPTPTRLLREATANGLDTLDGVLMFVLQAAEAFERFTGHKPDIALGEQVIRKQLEES.

Residues 13 to 15 (SLS) and threonine 60 each bind shikimate. Lysine 64 (proton acceptor) is an active-site residue. Shikimate is bound by residues asparagine 85 and aspartate 100. NADP(+)-binding positions include 121–125 (GAGGA) and isoleucine 202. Tyrosine 204 contributes to the shikimate binding site. Glycine 225 provides a ligand contact to NADP(+).

The protein belongs to the shikimate dehydrogenase family. In terms of assembly, homodimer.

It catalyses the reaction shikimate + NADP(+) = 3-dehydroshikimate + NADPH + H(+). The protein operates within metabolic intermediate biosynthesis; chorismate biosynthesis; chorismate from D-erythrose 4-phosphate and phosphoenolpyruvate: step 4/7. Involved in the biosynthesis of the chorismate, which leads to the biosynthesis of aromatic amino acids. Catalyzes the reversible NADPH linked reduction of 3-dehydroshikimate (DHSA) to yield shikimate (SA). This is Shikimate dehydrogenase (NADP(+)) from Exiguobacterium sibiricum (strain DSM 17290 / CCUG 55495 / CIP 109462 / JCM 13490 / 255-15).